Consider the following 57-residue polypeptide: COP9 signalosome complex subunit 9 (57 aa).

A Phosphothreonine modification is found at T26.

It belongs to the CSN9 family. As to quaternary structure, component of the CSN complex, composed of COPS1/GPS1, COPS2, COPS3, COPS4, COPS5, COPS6, COPS7 (COPS7A or COPS7B), COPS8 and COPS9. In the complex, it interacts directly with COPS3, COPS5 and COPS6.

The protein resides in the nucleus. It localises to the cytoplasm. Its subcellular location is the nucleoplasm. Its function is as follows. Component of the COP9 signalosome complex (CSN), a complex involved in various cellular and developmental processes. The CSN complex is an essential regulator of the ubiquitin (Ubl) conjugation pathway by mediating the deneddylation of the cullin subunits of SCF-type E3 ligase complexes, leading to decrease the Ubl ligase activity of SCF-type complexes such as SCF, CSA or DDB2. The complex is also involved in phosphorylation of p53/TP53, c-jun/JUN, IkappaBalpha/NFKBIA, ITPK1 and IRF8/ICSBP, possibly via its association with CK2 and PKD kinases. CSN-dependent phosphorylation of TP53 and JUN promotes and protects degradation by the Ubl system, respectively. Plays a role in cell proliferation. The sequence is that of COP9 signalosome complex subunit 9 from Mus musculus (Mouse).